Reading from the N-terminus, the 207-residue chain is ATP-dependent Clp protease proteolytic subunit (207 aa).

The active-site Nucleophile is the serine 111. Histidine 136 is a catalytic residue.

The protein belongs to the peptidase S14 family. In terms of assembly, fourteen ClpP subunits assemble into 2 heptameric rings which stack back to back to give a disk-like structure with a central cavity, resembling the structure of eukaryotic proteasomes.

It is found in the cytoplasm. It carries out the reaction Hydrolysis of proteins to small peptides in the presence of ATP and magnesium. alpha-casein is the usual test substrate. In the absence of ATP, only oligopeptides shorter than five residues are hydrolyzed (such as succinyl-Leu-Tyr-|-NHMec, and Leu-Tyr-Leu-|-Tyr-Trp, in which cleavage of the -Tyr-|-Leu- and -Tyr-|-Trp bonds also occurs).. Cleaves peptides in various proteins in a process that requires ATP hydrolysis. Has a chymotrypsin-like activity. Plays a major role in the degradation of misfolded proteins. In Yersinia pseudotuberculosis serotype O:1b (strain IP 31758), this protein is ATP-dependent Clp protease proteolytic subunit.